The primary structure comprises 146 residues: MARVRHKRKPVAEMNVVPYIDVMLVLLVIFMVTAPMLNQGVKVDLPKVSSEALPQDNNKQVLTLSVKADGSYYWNVGSEVDTEKQTDSAVSLEQMTDAVTKIMSARPDTQVFIRGDKAVNYGAVVGAMGALQQAGVPNVGLITEAP.

A helical membrane pass occupies residues 16–36; the sequence is VVPYIDVMLVLLVIFMVTAPM.

The protein belongs to the ExbD/TolR family. As to quaternary structure, the Tol-Pal system is composed of five core proteins: the inner membrane proteins TolA, TolQ and TolR, the periplasmic protein TolB and the outer membrane protein Pal. They form a network linking the inner and outer membranes and the peptidoglycan layer.

It is found in the cell inner membrane. Functionally, part of the Tol-Pal system, which plays a role in outer membrane invagination during cell division and is important for maintaining outer membrane integrity. The polypeptide is Tol-Pal system protein TolR (Pseudomonas aeruginosa (strain ATCC 15692 / DSM 22644 / CIP 104116 / JCM 14847 / LMG 12228 / 1C / PRS 101 / PAO1)).